Consider the following 50-residue polypeptide: Small, acid-soluble spore protein P (50 aa).

The interval 1–50 (MSKRKMGPKQQKNPELPKSPEQPYGEPLSGSKKEKKANHSGQKHNPHHGL) is disordered. Residues 33–50 (KEKKANHSGQKHNPHHGL) show a composition bias toward basic residues.

Belongs to the SspP family.

Its subcellular location is the spore core. The chain is Small, acid-soluble spore protein P from Oceanobacillus iheyensis (strain DSM 14371 / CIP 107618 / JCM 11309 / KCTC 3954 / HTE831).